The following is a 526-amino-acid chain: Cytochrome P450 monooxygenase milC (526 aa).

The helical transmembrane segment at 2-20 threads the bilayer; the sequence is AIHAAYIFIAATLIALYVA. Heme is bound at residue Cys-470.

This sequence belongs to the cytochrome P450 family. Heme serves as cofactor.

The protein resides in the membrane. The catalysed reaction is cordypyrone A + reduced [NADPH--hemoprotein reductase] + O2 = cordypyrone B + oxidized [NADPH--hemoprotein reductase] + H2O + H(+). Its pathway is secondary metabolite biosynthesis. In terms of biological role, cytochrome P450 monooxygenase; part of the gene cluster that mediates the biosynthesis of cordypyrones A and B, 2 pyrones that show modest activities against pathogenic bacteria including methicillin-resistant Staphylococcus aureus (MRSA), Mycobacterium tuberculosis and Bacillus cereus. The HR-PKS milA catalyzes the formation of cordypyrones A via condensation of one acetate with 10 malonate units. Since milA lacks an enoyl reductase domain, the 2 beta-keto processing domains DH and KR of milA collaborate with the trans-enoyl reductase milB to catalyze the different levels of reduction. The cytochrome P450 monooxygenase milC then hydroxylates the C-22 of cordypyrones A to yield cordypyrones B. This is Cytochrome P450 monooxygenase milC from Cordyceps militaris (strain CM01) (Caterpillar fungus).